The primary structure comprises 283 residues: PTS system mannose-specific EIID component (283 aa).

Position 1 is an N-formylmethionine (Met1). Residues 1–14 lie on the Cytoplasmic side of the membrane; the sequence is MVDTTQTTTEKKLT. One can recognise a PTS EIID domain in the interval 11 to 281; sequence KKLTQSDIRG…GIAGYACGLL (271 aa). The stretch at 15 to 52 is an intramembrane region; the sequence is QSDIRGVFLRSNLFQGSWNFERMQALGFCFSMVPAIRR. At 53 to 59 the chain is on the cytoplasmic side; sequence LYPENNE. An intramembrane segment occupies 60 to 92; the sequence is ARKQAIRRHLEFFNTQPFVAAPILGVTLALEEQ. The Cytoplasmic portion of the chain corresponds to 93-100; it reads RANGAEID. A transmembrane span lies at residues 101-140; sequence DGAINGIKVGLMGPLAGVGDPIFWGTVRPVFAALGAGIAM. Residues 141 to 144 lie on the Periplasmic side of the membrane; the sequence is SGSL. The segment at 145–173 is a transmembrane helix; sequence LGPLLFFILFNLVRLATRYYGVAYGYSKG. At 174 to 183 the chain is on the cytoplasmic side; sequence IDIVKDMGGG. A transmembrane helix spans residues 184 to 209; sequence FLQKLTEGASILGLFVMGALVNKWTH. Residues 210–241 are Periplasmic-facing; the sequence is VNIPLVVSRITDQTGKEHVTTVQTILDQLMPG. Positions 242-255 form a transmembrane segment; it reads LVPLLLTFACMWLL. Topologically, residues 256–261 are cytoplasmic; it reads RKKVNP. A transmembrane span lies at residues 262–280; the sequence is LWIIVGFFVIGIAGYACGL. The Periplasmic segment spans residues 281–283; it reads LGL.

In terms of assembly, homotrimer of protomers that are composed of two subunits, IIC and IID.

It is found in the cell inner membrane. The phosphoenolpyruvate-dependent sugar phosphotransferase system (sugar PTS), a major carbohydrate active transport system, catalyzes the phosphorylation of incoming sugar substrates concomitantly with their translocation across the cell membrane. The enzyme II ManXYZ PTS system is involved in mannose transport. In Escherichia coli O157:H7, this protein is PTS system mannose-specific EIID component (manZ).